A 208-amino-acid polypeptide reads, in one-letter code: Uridine kinase (208 aa).

11-18 (GGTGSGKS) contacts ATP.

It belongs to the uridine kinase family.

It localises to the cytoplasm. It carries out the reaction uridine + ATP = UMP + ADP + H(+). The catalysed reaction is cytidine + ATP = CMP + ADP + H(+). It participates in pyrimidine metabolism; CTP biosynthesis via salvage pathway; CTP from cytidine: step 1/3. It functions in the pathway pyrimidine metabolism; UMP biosynthesis via salvage pathway; UMP from uridine: step 1/1. This chain is Uridine kinase, found in Clostridium perfringens (strain SM101 / Type A).